The sequence spans 23 residues: NEESDLIADKFTNYNKLIRPAKH.

This sequence belongs to the ligand-gated ion channel (TC 1.A.9) family. Acetylcholine receptor (TC 1.A.9.1) subfamily. Gamma/CHRNG sub-subfamily. In terms of assembly, pentamer of two alpha chains, and one each of the beta, delta, and gamma chains.

Its subcellular location is the postsynaptic cell membrane. It is found in the cell membrane. The enzyme catalyses K(+)(in) = K(+)(out). It carries out the reaction Na(+)(in) = Na(+)(out). Functionally, after binding acetylcholine, the AChR responds by an extensive change in conformation that affects all subunits and leads to opening of an ion-conducting channel across the plasma membrane. The chain is Acetylcholine receptor subunit gamma (chrng) from Electrophorus electricus (Electric eel).